A 405-amino-acid chain; its full sequence is FAD-dependent monooxygenase thnD (405 aa).

FAD-binding residues include Glu-30, Ala-45, Arg-106, Asp-308, and Gly-321.

The protein belongs to the paxM FAD-dependent monooxygenase family. Requires FAD as cofactor.

In terms of biological role, FAD-dependent monooxygenase; part of the gene cluster that produces the tetronate natural products trihazones. Transcription analysis of thnD confirmed this gene is expressed, hence its role in the biosynthetic pathway remains cryptic. The pathway begins with the formation of trihazone A by the hybrid PKS-NRPS synthetase thnA and the trans-enoyl reductase thnE. Trihazone A is further decarboxylated by the 2-oxoglutarate-dependent dioxygenase thnC to produce trihazone D. The function of the FAD-dependent monooxygenase thnD has still to be identified. In Trichoderma harzianum (Hypocrea lixii), this protein is FAD-dependent monooxygenase thnD.